The following is a 278-amino-acid chain: 4-deoxy-L-threo-5-hexosulose-uronate ketol-isomerase (278 aa).

Zn(2+) is bound by residues H196, H198, E203, and H245.

This sequence belongs to the KduI family. It depends on Zn(2+) as a cofactor.

The enzyme catalyses 5-dehydro-4-deoxy-D-glucuronate = 3-deoxy-D-glycero-2,5-hexodiulosonate. It participates in glycan metabolism; pectin degradation; 2-dehydro-3-deoxy-D-gluconate from pectin: step 4/5. In terms of biological role, catalyzes the isomerization of 5-dehydro-4-deoxy-D-glucuronate to 3-deoxy-D-glycero-2,5-hexodiulosonate. In Edwardsiella ictaluri (strain 93-146), this protein is 4-deoxy-L-threo-5-hexosulose-uronate ketol-isomerase.